The sequence spans 135 residues: HTH-type transcriptional regulator ZntR homolog (135 aa).

The HTH merR-type domain maps to 1-69 (MKIGALAKAL…LSEIKSLLNL (69 aa)). The H-T-H motif DNA-binding region spans 4–23 (GALAKALGCTVETIRYYEQQ).

Its function is as follows. Transcriptional regulator. This is HTH-type transcriptional regulator ZntR homolog (zntR) from Haemophilus influenzae (strain ATCC 51907 / DSM 11121 / KW20 / Rd).